The sequence spans 180 residues: ATP synthase subunit delta (180 aa).

Belongs to the ATPase delta chain family. As to quaternary structure, F-type ATPases have 2 components, F(1) - the catalytic core - and F(0) - the membrane proton channel. F(1) has five subunits: alpha(3), beta(3), gamma(1), delta(1), epsilon(1). F(0) has three main subunits: a(1), b(2) and c(10-14). The alpha and beta chains form an alternating ring which encloses part of the gamma chain. F(1) is attached to F(0) by a central stalk formed by the gamma and epsilon chains, while a peripheral stalk is formed by the delta and b chains.

It localises to the cell inner membrane. F(1)F(0) ATP synthase produces ATP from ADP in the presence of a proton or sodium gradient. F-type ATPases consist of two structural domains, F(1) containing the extramembraneous catalytic core and F(0) containing the membrane proton channel, linked together by a central stalk and a peripheral stalk. During catalysis, ATP synthesis in the catalytic domain of F(1) is coupled via a rotary mechanism of the central stalk subunits to proton translocation. Functionally, this protein is part of the stalk that links CF(0) to CF(1). It either transmits conformational changes from CF(0) to CF(1) or is implicated in proton conduction. This is ATP synthase subunit delta from Paracidovorax citrulli (strain AAC00-1) (Acidovorax citrulli).